Here is a 1440-residue protein sequence, read N- to C-terminus: Gag-Pol polyprotein (1440 aa).

A lipid anchor (N-myristoyl glycine; by host) is attached at glycine 2. The segment at 7–31 is interaction with Gp41; it reads VLSGGKLDAWEKIRLRPGGKKKYRL. Positions 8–43 are interaction with host CALM1; that stretch reads LSGGKLDAWEKIRLRPGGKKKYRLKHLVWASRELER. Positions 12 to 19 are interaction with host AP3D1; sequence KLDAWEKI. Positions 14–33 are interaction with membrane phosphatidylinositol 4,5-bisphosphate and RNA; it reads DAWEKIRLRPGGKKKYRLKH. The short motif at 16 to 22 is the Nuclear export signal element; it reads WEKIRLR. The short motif at 26–32 is the Nuclear localization signal element; sequence KKKYRLK. The tract at residues 73 to 77 is interaction with membrane phosphatidylinositol 4,5-bisphosphate; that stretch reads EEIKS. Tyrosine 138 is modified (phosphotyrosine; by host). Residues 195 to 233 are interaction with human PPIA/CYPA and NUP153; the sequence is NIVGGHQAAMQMLKDTINEEAADWDRVHPVHAGPIPPGQ. Residues 283–369 are dimerization/Multimerization of capsid protein p24; the sequence is YSPVSILDIR…GGPSHKARVL (87 aa). 2 CCHC-type zinc fingers span residues 396 to 413 and 417 to 434; these read IKCF…NCRA and KGCW…DCTE. The dimerization of protease stretch occupies residues 494 to 498; sequence PQITL. Positions 513–582 constitute a Peptidase A2 domain; it reads KEALLDTGAD…TPVNIIGRNM (70 aa). The For protease activity; shared with dimeric partner role is filled by aspartate 518. Dimerization of protease stretches follow at residues 542-548 and 581-593; these read GIGGFIK and NMLT…LNFP. The Reverse transcriptase domain occupies 636 to 826; that stretch reads EGKILKIGPE…PPFLWMGYEL (191 aa). Residues aspartate 702, aspartate 777, and aspartate 778 each coordinate Mg(2+). The RT 'primer grip' stretch occupies residues 819 to 827; that stretch reads FLWMGYELH. Positions 990 to 1006 match the Tryptophan repeat motif motif; it reads WEAWWTEYWQATWIPEW. The 124-residue stretch at 1026 to 1149 folds into the RNase H type-1 domain; sequence IVGAETFYVD…VDKLVSSGIR (124 aa). The Mg(2+) site is built by aspartate 1035, glutamate 1070, aspartate 1090, and aspartate 1141. The Integrase-type zinc finger occupies 1155–1196; that stretch reads DGIDKAQEEHEKYHSNWRAMASDFNLPPIVAKEIVASCDKCQ. Zn(2+) is bound by residues histidine 1164, histidine 1168, cysteine 1192, and cysteine 1195. In terms of domain architecture, Integrase catalytic spans 1206–1356; sequence VDCSPGIWQL…SAGERIIDMI (151 aa). 3 residues coordinate Mg(2+): aspartate 1216, aspartate 1268, and glutamate 1304. Residues 1375–1422 constitute a DNA-binding region (integrase-type); the sequence is FRVYYRDNRDPIWKGPAKLLWKGEGAVVIQDNSDIKVVPRRKAKIIRD.

Homotrimer; further assembles as hexamers of trimers. Interacts with gp41 (via C-terminus). Interacts with host CALM1; this interaction induces a conformational change in the Matrix protein, triggering exposure of the myristate group. Interacts with host AP3D1; this interaction allows the polyprotein trafficking to multivesicular bodies during virus assembly. Part of the pre-integration complex (PIC) which is composed of viral genome, matrix protein, Vpr and integrase. As to quaternary structure, homodimer; the homodimer further multimerizes as homohexamers or homopentamers. Interacts with human PPIA/CYPA; This interaction stabilizes the capsid. Interacts with human NUP153. Interacts with host PDZD8; this interaction stabilizes the capsid. Interacts with monkey TRIM5; this interaction destabilizes the capsid. In terms of assembly, homodimer, whose active site consists of two apposed aspartic acid residues. Heterodimer of p66 RT and p51 RT (RT p66/p51). Heterodimerization of RT is essential for DNA polymerase activity. The overall folding of the subdomains is similar in p66 RT and p51 RT but the spatial arrangements of the subdomains are dramatically different. As to quaternary structure, homotetramer; may further associate as a homohexadecamer. Part of the pre-integration complex (PIC) which is composed of viral genome, matrix protein, Vpr and integrase. Interacts with human SMARCB1/INI1 and human PSIP1/LEDGF isoform 1. Interacts with human KPNA3; this interaction might play a role in nuclear import of the pre-integration complex. Interacts with human NUP153; this interaction might play a role in nuclear import of the pre-integration complex. It depends on Mg(2+) as a cofactor. Post-translationally, specific enzymatic cleavages by the viral protease yield mature proteins. The protease is released by autocatalytic cleavage. The polyprotein is cleaved during and after budding, this process is termed maturation. Proteolytic cleavage of p66 RT removes the RNase H domain to yield the p51 RT subunit. Nucleocapsid protein p7 might be further cleaved after virus entry. Tyrosine phosphorylated presumably in the virion by a host kinase. Phosphorylation is apparently not a major regulator of membrane association. In terms of processing, phosphorylated possibly by host MAPK1; this phosphorylation is necessary for Pin1-mediated virion uncoating. Post-translationally, methylated by host PRMT6, impairing its function by reducing RNA annealing and the initiation of reverse transcription.

The protein resides in the host cell membrane. It localises to the host endosome. It is found in the host multivesicular body. The protein localises to the virion membrane. Its subcellular location is the host nucleus. The protein resides in the host cytoplasm. It localises to the virion. The enzyme catalyses Specific for a P1 residue that is hydrophobic, and P1' variable, but often Pro.. The catalysed reaction is Endohydrolysis of RNA in RNA/DNA hybrids. Three different cleavage modes: 1. sequence-specific internal cleavage of RNA. Human immunodeficiency virus type 1 and Moloney murine leukemia virus enzymes prefer to cleave the RNA strand one nucleotide away from the RNA-DNA junction. 2. RNA 5'-end directed cleavage 13-19 nucleotides from the RNA end. 3. DNA 3'-end directed cleavage 15-20 nucleotides away from the primer terminus.. It catalyses the reaction 3'-end directed exonucleolytic cleavage of viral RNA-DNA hybrid.. It carries out the reaction DNA(n) + a 2'-deoxyribonucleoside 5'-triphosphate = DNA(n+1) + diphosphate. Its activity is regulated as follows. Protease: The viral protease is inhibited by many synthetic protease inhibitors (PIs), such as amprenavir, atazanavir, indinavir, loprinavir, nelfinavir, ritonavir and saquinavir. Use of protease inhibitors in tritherapy regimens permit more ambitious therapeutic strategies. Reverse transcriptase/ribonuclease H: RT can be inhibited either by nucleoside RT inhibitors (NRTIs) or by non nucleoside RT inhibitors (NNRTIs). NRTIs act as chain terminators, whereas NNRTIs inhibit DNA polymerization by binding a small hydrophobic pocket near the RT active site and inducing an allosteric change in this region. Classical NRTIs are abacavir, adefovir (PMEA), didanosine (ddI), lamivudine (3TC), stavudine (d4T), tenofovir (PMPA), zalcitabine (ddC), and zidovudine (AZT). Classical NNRTIs are atevirdine (BHAP U-87201E), delavirdine, efavirenz (DMP-266), emivirine (I-EBU), and nevirapine (BI-RG-587). The tritherapies used as a basic effective treatment of AIDS associate two NRTIs and one NNRTI. Its function is as follows. Mediates, with Gag polyprotein, the essential events in virion assembly, including binding the plasma membrane, making the protein-protein interactions necessary to create spherical particles, recruiting the viral Env proteins, and packaging the genomic RNA via direct interactions with the RNA packaging sequence (Psi). Gag-Pol polyprotein may regulate its own translation, by the binding genomic RNA in the 5'-UTR. At low concentration, the polyprotein would promote translation, whereas at high concentration, the polyprotein would encapsidate genomic RNA and then shut off translation. In terms of biological role, targets the polyprotein to the plasma membrane via a multipartite membrane-binding signal, that includes its myristoylated N-terminus. Matrix protein is part of the pre-integration complex. Implicated in the release from host cell mediated by Vpu. Binds to RNA. Functionally, forms the conical core that encapsulates the genomic RNA-nucleocapsid complex in the virion. Most core are conical, with only 7% tubular. The core is constituted by capsid protein hexamer subunits. The core is disassembled soon after virion entry. Host restriction factors such as TRIM5-alpha or TRIMCyp bind retroviral capsids and cause premature capsid disassembly, leading to blocks in reverse transcription. Capsid restriction by TRIM5 is one of the factors which restricts HIV-1 to the human species. Host PIN1 apparently facilitates the virion uncoating. On the other hand, interactions with PDZD8 or CYPA stabilize the capsid. Encapsulates and protects viral dimeric unspliced genomic RNA (gRNA). Binds these RNAs through its zinc fingers. Acts as a nucleic acid chaperone which is involved in rearangement of nucleic acid secondary structure during gRNA retrotranscription. Also facilitates template switch leading to recombination. As part of the polyprotein, participates in gRNA dimerization, packaging, tRNA incorporation and virion assembly. Its function is as follows. Aspartyl protease that mediates proteolytic cleavages of Gag and Gag-Pol polyproteins during or shortly after the release of the virion from the plasma membrane. Cleavages take place as an ordered, step-wise cascade to yield mature proteins. This process is called maturation. Displays maximal activity during the budding process just prior to particle release from the cell. Also cleaves Nef and Vif, probably concomitantly with viral structural proteins on maturation of virus particles. Hydrolyzes host EIF4GI and PABP1 in order to shut off the capped cellular mRNA translation. The resulting inhibition of cellular protein synthesis serves to ensure maximal viral gene expression and to evade host immune response. Also mediates cleavage of host YTHDF3. Mediates cleavage of host CARD8, thereby activating the CARD8 inflammasome, leading to the clearance of latent HIV-1 in patient CD4(+) T-cells after viral reactivation; in contrast, HIV-1 can evade CARD8-sensing when its protease remains inactive in infected cells prior to viral budding. In terms of biological role, multifunctional enzyme that converts the viral RNA genome into dsDNA in the cytoplasm, shortly after virus entry into the cell. This enzyme displays a DNA polymerase activity that can copy either DNA or RNA templates, and a ribonuclease H (RNase H) activity that cleaves the RNA strand of RNA-DNA heteroduplexes in a partially processive 3' to 5' endonucleasic mode. Conversion of viral genomic RNA into dsDNA requires many steps. A tRNA(3)-Lys binds to the primer-binding site (PBS) situated at the 5'-end of the viral RNA. RT uses the 3' end of the tRNA primer to perform a short round of RNA-dependent minus-strand DNA synthesis. The reading proceeds through the U5 region and ends after the repeated (R) region which is present at both ends of viral RNA. The portion of the RNA-DNA heteroduplex is digested by the RNase H, resulting in a ssDNA product attached to the tRNA primer. This ssDNA/tRNA hybridizes with the identical R region situated at the 3' end of viral RNA. This template exchange, known as minus-strand DNA strong stop transfer, can be either intra- or intermolecular. RT uses the 3' end of this newly synthesized short ssDNA to perform the RNA-dependent minus-strand DNA synthesis of the whole template. RNase H digests the RNA template except for two polypurine tracts (PPTs) situated at the 5'-end and near the center of the genome. It is not clear if both polymerase and RNase H activities are simultaneous. RNase H probably can proceed both in a polymerase-dependent (RNA cut into small fragments by the same RT performing DNA synthesis) and a polymerase-independent mode (cleavage of remaining RNA fragments by free RTs). Secondly, RT performs DNA-directed plus-strand DNA synthesis using the PPTs that have not been removed by RNase H as primers. PPTs and tRNA primers are then removed by RNase H. The 3' and 5' ssDNA PBS regions hybridize to form a circular dsDNA intermediate. Strand displacement synthesis by RT to the PBS and PPT ends produces a blunt ended, linear dsDNA copy of the viral genome that includes long terminal repeats (LTRs) at both ends. Functionally, catalyzes viral DNA integration into the host chromosome, by performing a series of DNA cutting and joining reactions. This enzyme activity takes place after virion entry into a cell and reverse transcription of the RNA genome in dsDNA. The first step in the integration process is 3' processing. This step requires a complex comprising the viral genome, matrix protein, Vpr and integrase. This complex is called the pre-integration complex (PIC). The integrase protein removes 2 nucleotides from each 3' end of the viral DNA, leaving recessed CA OH's at the 3' ends. In the second step, the PIC enters cell nucleus. This process is mediated through integrase and Vpr proteins, and allows the virus to infect a non dividing cell. This ability to enter the nucleus is specific of lentiviruses, other retroviruses cannot and rely on cell division to access cell chromosomes. In the third step, termed strand transfer, the integrase protein joins the previously processed 3' ends to the 5' ends of strands of target cellular DNA at the site of integration. The 5'-ends are produced by integrase-catalyzed staggered cuts, 5 bp apart. A Y-shaped, gapped, recombination intermediate results, with the 5'-ends of the viral DNA strands and the 3' ends of target DNA strands remaining unjoined, flanking a gap of 5 bp. The last step is viral DNA integration into host chromosome. This involves host DNA repair synthesis in which the 5 bp gaps between the unjoined strands are filled in and then ligated. Since this process occurs at both cuts flanking the HIV genome, a 5 bp duplication of host DNA is produced at the ends of HIV-1 integration. Alternatively, Integrase may catalyze the excision of viral DNA just after strand transfer, this is termed disintegration. This Human immunodeficiency virus type 1 group M subtype A (isolate MAL) (HIV-1) protein is Gag-Pol polyprotein (gag-pol).